We begin with the raw amino-acid sequence, 495 residues long: MDLLCTRPGCARLNSFPDLDNRNTLQTVQQRFCTSCRMPLILAGRYLPVKLLGQGGFGAAYLALDRFTPTMRFCVVKQFQPSGNLNQEQLDLALSLFEREAVVLEKLGNRHDQIPDLFAYFPLLVDDPRTGKQDQFFYLVQEFINGQDLEKTVEKHGPLSEAEVRWVLTEMLKILSFVHGTGAIHRDIKPSNLMRDQEGKLYLLDFGAVKQATAGVGASNEGSTGIYSMGFAPPEQMAGNQVYPATDLYALAVTCLYLLTGKTAQDLYDAYHNQWNWRSPGLKVSQPLADVIDRLLLPTPKDRYASAEEVLAVLNGGKGNQGKAPPGATVSTPQGTNTQIQPTPASSASPLTAPKTPGKISQAVQNLPVLKVLFQGALTGSALVFWGIIAVSLFPQTNISLGILGMVVAGIILAQFKRWLEVTEMLSLNTLTILALLAVPGLSRWPKIVELATQLDFPVLVTVIIAAIAGAIAVVATIALFLLILKLLFAVLTRV.

Residues 46 to 314 form the Protein kinase domain; the sequence is YLPVKLLGQG…ASAEEVLAVL (269 aa). Residues 52-60 and Lys77 contribute to the ATP site; that span reads LGQGGFGAA. Catalysis depends on Asp187, which acts as the Proton acceptor. The segment at 316–354 is disordered; the sequence is GGKGNQGKAPPGATVSTPQGTNTQIQPTPASSASPLTAP. A compositionally biased stretch (polar residues) spans 329–350; sequence TVSTPQGTNTQIQPTPASSASP.

This sequence belongs to the protein kinase superfamily. Ser/Thr protein kinase family.

It carries out the reaction L-seryl-[protein] + ATP = O-phospho-L-seryl-[protein] + ADP + H(+). The catalysed reaction is L-threonyl-[protein] + ATP = O-phospho-L-threonyl-[protein] + ADP + H(+). This chain is Serine/threonine-protein kinase F (spkF), found in Synechocystis sp. (strain ATCC 27184 / PCC 6803 / Kazusa).